The chain runs to 81 residues: U10-myrmicitoxin-Mri1b (81 aa).

The N-terminal stretch at 1-26 is a signal peptide; the sequence is MRLSYISLTLAIIFVMAIVHAPETEA. A propeptide spanning residues 27-52 is cleaved from the precursor; that stretch reads KAYPEADAVAEAIAVGEADAVGVADP. Valine amide is present on valine 80.

The protein belongs to the formicidae venom precursor-01 superfamily. Expressed by the venom gland.

The protein resides in the secreted. Its function is as follows. Induces paralysis after injection into blowflies (L.caesar), and then death within 24 hours. May have antimicrobial properties, like most ant linear peptides. The polypeptide is U10-myrmicitoxin-Mri1b (Manica rubida (European giant red ant)).